The sequence spans 128 residues: Ribonuclease pancreatic (128 aa).

The interval 1–20 (KETAAMKFQRQHMDSGSSLS) is disordered. 2 residues coordinate substrate: Lys-7 and Arg-10. The active-site Proton acceptor is His-12. Disulfide bonds link Cys-26–Cys-84, Cys-40–Cys-95, Cys-58–Cys-110, and Cys-65–Cys-72. A glycan (N-linked (GlcNAc...) asparagine) is linked at Asn-34. Substrate is bound by residues 41–45 (KPVNT), Lys-66, and Arg-85. The Proton donor role is filled by His-119.

Belongs to the pancreatic ribonuclease family. Monomer. Interacts with and forms tight 1:1 complexes with RNH1. Dimerization of two such complexes may occur. Interaction with RNH1 inhibits this protein. Pancreas.

The protein resides in the secreted. The catalysed reaction is an [RNA] containing cytidine + H2O = an [RNA]-3'-cytidine-3'-phosphate + a 5'-hydroxy-ribonucleotide-3'-[RNA].. It catalyses the reaction an [RNA] containing uridine + H2O = an [RNA]-3'-uridine-3'-phosphate + a 5'-hydroxy-ribonucleotide-3'-[RNA].. In terms of biological role, endonuclease that catalyzes the cleavage of RNA on the 3' side of pyrimidine nucleotides. Acts on single-stranded and double-stranded RNA. This chain is Ribonuclease pancreatic (RNASE1), found in Choloepus hoffmanni (Hoffmann's two-fingered sloth).